The primary structure comprises 139 residues: Small ribosomal subunit protein uS12 (139 aa).

Asp102 carries the 3-methylthioaspartic acid modification. The disordered stretch occupies residues 116 to 139; it reads DTTGVAKRSQGRSKYGAKRPKKSK. A compositionally biased stretch (basic residues) spans 124 to 139; it reads SQGRSKYGAKRPKKSK.

This sequence belongs to the universal ribosomal protein uS12 family. Part of the 30S ribosomal subunit. Contacts proteins S8 and S17. May interact with IF1 in the 30S initiation complex.

With S4 and S5 plays an important role in translational accuracy. Functionally, interacts with and stabilizes bases of the 16S rRNA that are involved in tRNA selection in the A site and with the mRNA backbone. Located at the interface of the 30S and 50S subunits, it traverses the body of the 30S subunit contacting proteins on the other side and probably holding the rRNA structure together. The combined cluster of proteins S8, S12 and S17 appears to hold together the shoulder and platform of the 30S subunit. This Mesomycoplasma hyopneumoniae (strain 7448) (Mycoplasma hyopneumoniae) protein is Small ribosomal subunit protein uS12.